A 338-amino-acid polypeptide reads, in one-letter code: Holliday junction branch migration complex subunit RuvB (338 aa).

Residues 1-179 (MTDLTTPIRT…FGIPVRLNFY (179 aa)) are large ATPase domain (RuvB-L). ATP-binding residues include Leu-18, Arg-19, Gly-60, Lys-63, Thr-64, Thr-65, Arg-169, Tyr-179, and Arg-216. Thr-64 is a binding site for Mg(2+). The tract at residues 180-250 (THAELEQVIG…AADAALNRLE (71 aa)) is small ATPAse domain (RuvB-S). The head domain (RuvB-H) stretch occupies residues 253 to 338 (ALGLDAMDRR…AGSQDGLFDK (86 aa)). Residues Arg-289, Arg-308, and Arg-313 each coordinate DNA.

Belongs to the RuvB family. In terms of assembly, homohexamer. Forms an RuvA(8)-RuvB(12)-Holliday junction (HJ) complex. HJ DNA is sandwiched between 2 RuvA tetramers; dsDNA enters through RuvA and exits via RuvB. An RuvB hexamer assembles on each DNA strand where it exits the tetramer. Each RuvB hexamer is contacted by two RuvA subunits (via domain III) on 2 adjacent RuvB subunits; this complex drives branch migration. In the full resolvosome a probable DNA-RuvA(4)-RuvB(12)-RuvC(2) complex forms which resolves the HJ.

The protein resides in the cytoplasm. It catalyses the reaction ATP + H2O = ADP + phosphate + H(+). In terms of biological role, the RuvA-RuvB-RuvC complex processes Holliday junction (HJ) DNA during genetic recombination and DNA repair, while the RuvA-RuvB complex plays an important role in the rescue of blocked DNA replication forks via replication fork reversal (RFR). RuvA specifically binds to HJ cruciform DNA, conferring on it an open structure. The RuvB hexamer acts as an ATP-dependent pump, pulling dsDNA into and through the RuvAB complex. RuvB forms 2 homohexamers on either side of HJ DNA bound by 1 or 2 RuvA tetramers; 4 subunits per hexamer contact DNA at a time. Coordinated motions by a converter formed by DNA-disengaged RuvB subunits stimulates ATP hydrolysis and nucleotide exchange. Immobilization of the converter enables RuvB to convert the ATP-contained energy into a lever motion, pulling 2 nucleotides of DNA out of the RuvA tetramer per ATP hydrolyzed, thus driving DNA branch migration. The RuvB motors rotate together with the DNA substrate, which together with the progressing nucleotide cycle form the mechanistic basis for DNA recombination by continuous HJ branch migration. Branch migration allows RuvC to scan DNA until it finds its consensus sequence, where it cleaves and resolves cruciform DNA. The sequence is that of Holliday junction branch migration complex subunit RuvB from Sphingopyxis alaskensis (strain DSM 13593 / LMG 18877 / RB2256) (Sphingomonas alaskensis).